A 271-amino-acid chain; its full sequence is Phosphate import ATP-binding protein PstB 2 (271 aa).

Positions 1–20 (MLTKKPEINTILQTTPDPHS) are disordered. Residues 25–266 (MATEDLHVYY…PQEKQTEDYI (242 aa)) form the ABC transporter domain. 57–64 (GPSGCGKS) provides a ligand contact to ATP.

This sequence belongs to the ABC transporter superfamily. Phosphate importer (TC 3.A.1.7) family. As to quaternary structure, the complex is composed of two ATP-binding proteins (PstB), two transmembrane proteins (PstC and PstA) and a solute-binding protein (PstS).

It localises to the cell membrane. It catalyses the reaction phosphate(out) + ATP + H2O = ADP + 2 phosphate(in) + H(+). Its function is as follows. Part of the ABC transporter complex PstSACB involved in phosphate import. Responsible for energy coupling to the transport system. The sequence is that of Phosphate import ATP-binding protein PstB 2 from Listeria innocua serovar 6a (strain ATCC BAA-680 / CLIP 11262).